Reading from the N-terminus, the 309-residue chain is Thermolabile glutaminase (309 aa).

S64, N114, E160, N167, Y191, Y243, and V261 together coordinate substrate.

It belongs to the glutaminase family. As to quaternary structure, homotetramer.

The catalysed reaction is L-glutamine + H2O = L-glutamate + NH4(+). The polypeptide is Thermolabile glutaminase (glsA) (Rhizobium etli (strain ATCC 51251 / DSM 11541 / JCM 21823 / NBRC 15573 / CFN 42)).